The chain runs to 210 residues: dTTP/UTP pyrophosphatase (210 aa).

The active-site Proton acceptor is the D89.

It belongs to the Maf family. YhdE subfamily. Requires a divalent metal cation as cofactor.

It is found in the cytoplasm. It catalyses the reaction dTTP + H2O = dTMP + diphosphate + H(+). The catalysed reaction is UTP + H2O = UMP + diphosphate + H(+). Its function is as follows. Nucleoside triphosphate pyrophosphatase that hydrolyzes dTTP and UTP. May have a dual role in cell division arrest and in preventing the incorporation of modified nucleotides into cellular nucleic acids. In Burkholderia lata (strain ATCC 17760 / DSM 23089 / LMG 22485 / NCIMB 9086 / R18194 / 383), this protein is dTTP/UTP pyrophosphatase.